We begin with the raw amino-acid sequence, 108 residues long: uncharacterized protein (108 aa).

This sequence to H.influenzae HI_0341.

This is an uncharacterized protein from Escherichia coli (strain K12).